The chain runs to 134 residues: Phospholipase A2 (134 aa).

The Ca(2+) site is built by tryptophan 8, glycine 10, and glycine 12. Disulfide bonds link cysteine 9/cysteine 31, cysteine 30/cysteine 70, cysteine 37/cysteine 63, cysteine 61/cysteine 95, and cysteine 105/cysteine 113. Asparagine 13 carries N-linked (GlcNAc...) asparagine glycosylation. Histidine 34 is a catalytic residue. A Ca(2+)-binding site is contributed by aspartate 35. The active site involves aspartate 64.

It belongs to the phospholipase A2 family. Group III subfamily. The cofactor is Ca(2+). Expressed by the venom gland.

It is found in the secreted. The catalysed reaction is a 1,2-diacyl-sn-glycero-3-phosphocholine + H2O = a 1-acyl-sn-glycero-3-phosphocholine + a fatty acid + H(+). Functionally, PLA2 catalyzes the calcium-dependent hydrolysis of the 2-acyl groups in 3-sn-phosphoglycerides. The polypeptide is Phospholipase A2 (Apis dorsata (Giant honeybee)).